The sequence spans 215 residues: Large ribosomal subunit protein uL4 (215 aa).

The interval 43–97 (RRQGTHSTKTRAEVSGGGKKPWRQKGTGRARAGSTRSPIWVGGGKTHTPKPRDYS) is disordered.

The protein belongs to the universal ribosomal protein uL4 family. Part of the 50S ribosomal subunit.

One of the primary rRNA binding proteins, this protein initially binds near the 5'-end of the 23S rRNA. It is important during the early stages of 50S assembly. It makes multiple contacts with different domains of the 23S rRNA in the assembled 50S subunit and ribosome. Functionally, forms part of the polypeptide exit tunnel. The chain is Large ribosomal subunit protein uL4 from Brachyspira hyodysenteriae (strain ATCC 49526 / WA1).